The chain runs to 757 residues: Vitamin K-dependent gamma-carboxylase (757 aa).

Alanine 2 is modified (N-acetylalanine). Residues 2 to 60 lie on the Cytoplasmic side of the membrane; that stretch reads AVHRGSALVAPASDKVQKNKSAQTSGLKQGSRMEKILGFEWTDLSSWQSVVTLLNKPTD. Residues 61–81 form a helical membrane-spanning segment; that stretch reads PANLAVFRFLFAFLMLLDIPQ. The Lumenal segment spans residues 82 to 113; the sequence is ERGLSSLDRKYLDGLDVCRFPLLDALRPLPLD. Cysteine 99 and cysteine 450 form a disulfide bridge. The chain crosses the membrane as a helical span at residues 114–134; the sequence is WMYLVYTIMFLGALGMMLGLC. The Cytoplasmic segment spans residues 135 to 136; that stretch reads YR. Residues 137-157 traverse the membrane as a helical segment; the sequence is LSCVLFLLPYWYVFLLDKTSW. Over 158-292 the chain is Lumenal; it reads NNHSYLYGLL…VSYFHCMNSQ (135 aa). A helical transmembrane segment spans residues 293–313; it reads LFSIGMFPYVMLASSPLFCSA. The Cytoplasmic portion of the chain corresponds to 314-361; sequence EWPRKLVARCPKRLQELLPTKAAPRPSASCVYKRSRGKAGPKPGLRHQ. Residues 362–382 traverse the membrane as a helical segment; the sequence is LGAIFTLLYLLEQLFLPYSHF. Topologically, residues 383-757 are lumenal; sequence LTQGYNNWTN…PDSEHVHSEF (375 aa). Positions 729-757 are disordered; sequence EPVDESSASNTDSSNHPSEPDSEHVHSEF. Residues 734–745 show a composition bias toward polar residues; the sequence is SSASNTDSSNHP. The span at 746 to 757 shows a compositional bias: basic and acidic residues; it reads SEPDSEHVHSEF.

The protein belongs to the vitamin K-dependent gamma-carboxylase family. As to quaternary structure, monomer. May interact with CALU.

The protein resides in the endoplasmic reticulum membrane. The enzyme catalyses 4-carboxy-L-glutamyl-[protein] + 2,3-epoxyphylloquinone + H2O + H(+) = phylloquinol + L-glutamyl-[protein] + CO2 + O2. In terms of biological role, mediates the vitamin K-dependent carboxylation of glutamate residues to calcium-binding gamma-carboxyglutamate (Gla) residues with the concomitant conversion of the reduced hydroquinone form of vitamin K to vitamin K epoxide. Catalyzes gamma-carboxylation of various proteins, such as blood coagulation factors (F2, F7, F9 and F10), osteocalcin (bglap and bglap2) or matrix Gla protein (MGP). The chain is Vitamin K-dependent gamma-carboxylase (Ggcx) from Mus musculus (Mouse).